The primary structure comprises 518 residues: Glutamate--cysteine ligase (518 aa).

The protein belongs to the glutamate--cysteine ligase type 1 family. Type 1 subfamily.

The catalysed reaction is L-cysteine + L-glutamate + ATP = gamma-L-glutamyl-L-cysteine + ADP + phosphate + H(+). The protein operates within sulfur metabolism; glutathione biosynthesis; glutathione from L-cysteine and L-glutamate: step 1/2. The protein is Glutamate--cysteine ligase of Salmonella typhi.